The primary structure comprises 388 residues: Succinate--CoA ligase [ADP-forming] subunit beta (388 aa).

One can recognise an ATP-grasp domain in the interval 9 to 244 (KQLFAEFGLP…PSQEDEREAH (236 aa)). Residues lysine 46, 53-55 (GRG), glutamate 99, serine 102, and glutamate 107 each bind ATP. Residues asparagine 199 and aspartate 213 each coordinate Mg(2+). Residues asparagine 264 and 321–323 (GIV) contribute to the substrate site.

Belongs to the succinate/malate CoA ligase beta subunit family. In terms of assembly, heterotetramer of two alpha and two beta subunits. Requires Mg(2+) as cofactor.

It catalyses the reaction succinate + ATP + CoA = succinyl-CoA + ADP + phosphate. The catalysed reaction is GTP + succinate + CoA = succinyl-CoA + GDP + phosphate. The protein operates within carbohydrate metabolism; tricarboxylic acid cycle; succinate from succinyl-CoA (ligase route): step 1/1. Succinyl-CoA synthetase functions in the citric acid cycle (TCA), coupling the hydrolysis of succinyl-CoA to the synthesis of either ATP or GTP and thus represents the only step of substrate-level phosphorylation in the TCA. The beta subunit provides nucleotide specificity of the enzyme and binds the substrate succinate, while the binding sites for coenzyme A and phosphate are found in the alpha subunit. The chain is Succinate--CoA ligase [ADP-forming] subunit beta from Aliivibrio fischeri (strain ATCC 700601 / ES114) (Vibrio fischeri).